The sequence spans 145 residues: Hemoglobin subunit beta (145 aa).

The Globin domain maps to 1 to 145 (MLTAEEKAAV…VANALAHRYH (145 aa)). Thr-11 carries the phosphothreonine modification. Lys-58 is modified (N6-acetyllysine). His-62 contributes to the heme b binding site. Lys-81 carries the post-translational modification N6-acetyllysine. His-91 is a binding site for heme b. Cys-92 carries the S-nitrosocysteine modification.

It belongs to the globin family. Heterotetramer of two alpha chains and two beta chains. Red blood cells.

In terms of biological role, involved in oxygen transport from the lung to the various peripheral tissues. The polypeptide is Hemoglobin subunit beta (HBB) (Alces alces alces (European moose)).